Reading from the N-terminus, the 285-residue chain is MAHQAHPFRSVLYIPGSKERALEKAQGLAADAIIFDLEDAVAHDEKIHARRLLKTTLETADYGHRFRIVRVNGMDTEWGRADLEAFAEAKADAILIPKVSRAADLEAVAALVPDLPLWAMMETAQGMLNAAEIAAHPRLSGMVMGTNDLAKELGSRYRPDRLAMQAGLGLCLLAARAHGLTIVDGVYNAFKDEEGLRAECEQGRDMGFDGKTLIHPAQLEIANAVFSPSPAEIELANRQIAAFEEAERHGQGVAVVDGKIVENLHIVTARQTLAKAEAIAAFRAS.

Arg-70 and Glu-122 together coordinate substrate. The Mg(2+) site is built by Glu-122 and Asp-148.

It belongs to the HpcH/HpaI aldolase family. Homodimer or homotrimer. Requires Mg(2+) as cofactor.

It carries out the reaction (S)-malyl-CoA + H2O = (S)-malate + CoA + H(+). With respect to regulation, reversibly inhibited by EDTA. Stimulated by the divalent cations Mg(2+) and Mn(2+). Functionally, catalyzes the hydrolysis of (3S)-malyl-CoA to (3S)-malate and free CoA. Inactive towards beta-methylmalyl-CoA and other CoA esters. This is (3S)-malyl-CoA thioesterase from Cereibacter sphaeroides (strain ATCC 17023 / DSM 158 / JCM 6121 / CCUG 31486 / LMG 2827 / NBRC 12203 / NCIMB 8253 / ATH 2.4.1.) (Rhodobacter sphaeroides).